The sequence spans 1506 residues: Condensin-2 complex subunit D3 (1506 aa).

Residues 154-194 (SNLTQKRKKDHSKSSKDNYRKSRKRGKPPRKEDYQVDELSR) form a disordered region. 3 HEAT repeats span residues 442 to 476 (HKFF…LELS), 532 to 567 (PGER…LKHC), and 574 to 605 (QDLL…VMAQ). Ser562 bears the Phosphoserine mark. Positions 884–897 (SDHLPSSQGTTDAL) are enriched in polar residues. Positions 884-908 (SDHLPSSQGTTDALDSQPPFQPRSS) are disordered. An HEAT 4 repeat occupies 968–1004 (TVMVDNYIPNISVCLKDSDPFIRKQTLVLLTNLLQEE). The stretch at 1213–1270 (ALRELMNYLREVMQDYRDEINDFFAVDKQLASELEYDMKKYNEQLAQEQALTEHANAT) forms a coiled coil. The disordered stretch occupies residues 1317 to 1353 (QDNADVPPTQSRPSAPRSNFTPTLPPISENGPLKIMS). The segment covering 1324-1338 (PTQSRPSAPRSNFTP) has biased composition (polar residues). Residues Ser1359, Ser1368, Ser1381, and Ser1393 each carry the phosphoserine modification. 2 disordered regions span residues 1385-1412 (LPFN…ESDR) and 1473-1506 (PQSP…KTAN). Low complexity predominate over residues 1393–1405 (SPENPSSHESSLS). A compositionally biased stretch (basic residues) spans 1492 to 1506 (SSRRSLRKAPLKTAN).

As to quaternary structure, component of the condensin-2 complex, which contains the SMC2 and SMC4 heterodimer, and 3 non SMC subunits that probably regulate the complex: NCAPH2, NCAPD3 and NCAPG2.

Its subcellular location is the nucleus. Functionally, regulatory subunit of the condensin-2 complex, a complex which establishes mitotic chromosome architecture and is involved in physical rigidity of the chromatid axis. May promote the resolution of double-strand DNA catenanes (intertwines) between sister chromatids. Condensin-mediated compaction likely increases tension in catenated sister chromatids, providing directionality for type II topoisomerase-mediated strand exchanges toward chromatid decatenation. Specifically required for decatenation of centromeric ultrafine DNA bridges during anaphase. Early in neurogenesis, may play an essential role to ensure accurate mitotic chromosome condensation in neuron stem cells, ultimately affecting neuron pool and cortex size. This Mus musculus (Mouse) protein is Condensin-2 complex subunit D3 (Ncapd3).